A 620-amino-acid chain; its full sequence is Hemagglutinin glycoprotein (620 aa).

Topologically, residues 1–37 (MSPQRDRTNAFYKDNPHPKGSRIVINREHLMIDRPYV) are intravirion. Residues 1-154 (MSPQRDRTNA…RIKLDYDQYC (154 aa)) are stalk. Residues 38–58 (LLAILFVMFLSLIGLLAIAGI) form a helical; Signal-anchor for type II membrane protein membrane-spanning segment. Over 59–620 (RLHQAAIHTA…EDGTNRRQSC (562 aa)) the chain is Virion surface. N-linked (GlcNAc...) asparagine; by host glycans are attached at residues Asn168, Asn187, Asn200, Asn215, and Asn238. Intrachain disulfides connect Cys188–Cys606, Cys287–Cys300, Cys381–Cys494, Cys386–Cys394, and Cys570–Cys579. The interaction with host NECTIN4 receptor stretch occupies residues 458–543 (PMKNLALGVI…VEHAVVYYVY (86 aa)).

The protein belongs to the paramyxoviruses hemagglutinin-neuraminidase family. Non-sialidase subfamily. In terms of assembly, homodimer; disulfide-linked. Further forms homotetramer (dimer of dimers). Interacts (via C-terminus) with human NECTIN4 (via N-terminus); this interaction allows attachment to the respiratory epithelium and viral entry. Interacts (via C-terminus) with human SLAMF1/CD150 (via N-terminus); this interaction allows attachment and viral entry into the CD150-expressing immune cells.

Its subcellular location is the virion membrane. The protein localises to the host cell membrane. Functionally, attaches the virus to the human SLAMF1/CD150 receptor for entry into host dendritic cells, macrophages, activated memory T cells and naive or memory B cells, thereby explaining the long immunosuppression that follows infection. In the respiratory airways, binds to the NECTIN4 receptor for entry into the host cell. Binding of H protein to the receptor induces a conformational change that allows the F protein to trigger virion/cell membranes fusion. In Homo sapiens (Human), this protein is Hemagglutinin glycoprotein (H).